A 124-amino-acid chain; its full sequence is Ragulator complex protein LAMTOR3 homolog (124 aa).

The protein belongs to the LAMTOR3 family. In terms of assembly, part of the Ragulator complex composed of Lamtor3, Lamtor2, CG14184, CG14812, and Lamtor4.

Its function is as follows. Regulator of the TOR pathway, a signaling cascade that promotes cell growth in response to growth factors, energy levels, and amino acids. As part of the Ragulator complex, may activate the TOR signaling cascade in response to amino acids. This chain is Ragulator complex protein LAMTOR3 homolog, found in Drosophila melanogaster (Fruit fly).